The following is a 202-amino-acid chain: N-(5'-phosphoribosyl)anthranilate isomerase (202 aa).

This sequence belongs to the TrpF family.

The enzyme catalyses N-(5-phospho-beta-D-ribosyl)anthranilate = 1-(2-carboxyphenylamino)-1-deoxy-D-ribulose 5-phosphate. It participates in amino-acid biosynthesis; L-tryptophan biosynthesis; L-tryptophan from chorismate: step 3/5. This chain is N-(5'-phosphoribosyl)anthranilate isomerase, found in Listeria monocytogenes serotype 4b (strain F2365).